Here is a 457-residue protein sequence, read N- to C-terminus: Multidrug resistance protein MdtK (457 aa).

12 helical membrane passes run 11–31 (LLAL…MGFV), 53–73 (IWLP…PVIA), 93–113 (WLAS…GYII), 127–147 (AVGY…FQVA), 160–180 (GMVM…IFIY), 188–208 (LGGI…FIAM), 243–263 (LPIA…ALLV), 276–296 (IALN…AAVT), 314–334 (AART…IFTV), 357–377 (LMLL…GSGI), 387–407 (IFFI…YILA), and 418–438 (PAGF…LMML).

This sequence belongs to the multi antimicrobial extrusion (MATE) (TC 2.A.66.1) family. MdtK subfamily.

The protein resides in the cell inner membrane. Functionally, multidrug efflux pump that functions probably as a Na(+)/drug antiporter. The protein is Multidrug resistance protein MdtK of Salmonella arizonae (strain ATCC BAA-731 / CDC346-86 / RSK2980).